The following is a 474-amino-acid chain: Glutamate--tRNA ligase (474 aa).

A 'HIGH' region motif is present at residues 11–21; the sequence is PSPTGFLHIGG. Residues 240-244 carry the 'KMSKS' region motif; it reads KLSKR. Lysine 243 is an ATP binding site.

Belongs to the class-I aminoacyl-tRNA synthetase family. Glutamate--tRNA ligase type 1 subfamily. In terms of assembly, monomer.

Its subcellular location is the cytoplasm. It carries out the reaction tRNA(Glu) + L-glutamate + ATP = L-glutamyl-tRNA(Glu) + AMP + diphosphate. Its function is as follows. Catalyzes the attachment of glutamate to tRNA(Glu) in a two-step reaction: glutamate is first activated by ATP to form Glu-AMP and then transferred to the acceptor end of tRNA(Glu). This is Glutamate--tRNA ligase from Nitrobacter hamburgensis (strain DSM 10229 / NCIMB 13809 / X14).